We begin with the raw amino-acid sequence, 142 residues long: Large ribosomal subunit protein uL13 (142 aa).

The protein belongs to the universal ribosomal protein uL13 family. In terms of assembly, part of the 50S ribosomal subunit.

Functionally, this protein is one of the early assembly proteins of the 50S ribosomal subunit, although it is not seen to bind rRNA by itself. It is important during the early stages of 50S assembly. The protein is Large ribosomal subunit protein uL13 of Polaromonas sp. (strain JS666 / ATCC BAA-500).